We begin with the raw amino-acid sequence, 680 residues long: Translation factor GUF1 homolog, chloroplastic (680 aa).

Residues Met-1–Val-51 constitute a chloroplast transit peptide. The tr-type G domain occupies Ser-83–Cys-264. Residues Ala-92–Ser-99, Asp-157–His-161, and Asn-211–Asp-214 contribute to the GTP site.

Belongs to the TRAFAC class translation factor GTPase superfamily. Classic translation factor GTPase family. LepA subfamily.

Its subcellular location is the plastid. It is found in the chloroplast. It catalyses the reaction GTP + H2O = GDP + phosphate + H(+). Its function is as follows. Promotes chloroplast protein synthesis. May act as a fidelity factor of the translation reaction, by catalyzing a one-codon backward translocation of tRNAs on improperly translocated ribosomes. This Vitis vinifera (Grape) protein is Translation factor GUF1 homolog, chloroplastic.